The primary structure comprises 301 residues: MDIRHLTYFLEVARLKSFTKASQSLYVSQPTISKMIKNLEEELGIELFYRNGRQVELTDAGHSMYVQAQEIIKSFQNLTSELNDIMEVKKGHVRIGLPPMIGSGFFPRVLGDFRENYPNVTFQLVEDGSIKVQEGVGDGSLDIGVVVLPANEDIFHSFTIVKETLMLVVHPSHRLADEKECQLRELKDEPFIFFREDFVLHNRIMTECIKAGFRPHIIYETSQWDFISEMVSANLGIGLLPERICRGLDPEKVKVIPLVDPVIPWHLAIIWRKDRYLSFAARAWLEHTKSYLWDPKKDSKG.

The HTH lysR-type domain occupies 1–58; the sequence is MDIRHLTYFLEVARLKSFTKASQSLYVSQPTISKMIKNLEEELGIELFYRNGRQVELT. A DNA-binding region (H-T-H motif) is located at residues 18–37; the sequence is FTKASQSLYVSQPTISKMIK.

It belongs to the LysR transcriptional regulatory family.

This is an uncharacterized protein from Bacillus subtilis (strain 168).